The primary structure comprises 463 residues: Sodium-coupled neutral amino acid transporter 7 (463 aa).

Serine 28 carries the post-translational modification Phosphoserine. 11 consecutive transmembrane segments (helical) span residues 56–76 (AIFI…PAAF), 82–102 (VAAG…GLVI), 130–150 (LCEV…LIII), 179–199 (FTIS…REIG), 206–226 (FLSV…YIWP), 240–260 (ASWI…QCHV), 283–303 (AAMV…FLTF), 320–340 (MAVA…YPIL), 372–392 (VLQT…IPDI), 396–416 (ISVI…LCLI), and 429–449 (ASWW…AFIF).

Belongs to the amino acid/polyamine transporter 2 family. In terms of assembly, interacts with the mTORC1 complex; this interaction mediates the recruitment of mTORC1 to the lysosome and its subsequent activation.

It localises to the lysosome membrane. It is found in the cell projection. Its subcellular location is the axon. It catalyses the reaction L-asparagine(in) + Na(+)(in) = L-asparagine(out) + Na(+)(out). The enzyme catalyses L-glutamine(in) + Na(+)(in) = L-glutamine(out) + Na(+)(out). Its function is as follows. Symporter that selectively cotransports sodium ions and amino acids, such as L-glutamine and L-asparagine from the lysosome into the cytoplasm and may participates in mTORC1 activation. The transport activity requires an acidic lysosomal lumen. The protein is Sodium-coupled neutral amino acid transporter 7 of Bos taurus (Bovine).